The chain runs to 193 residues: ATP synthase subunit b 1 (193 aa).

A disordered region spans residues 9 to 28 (QEADHTAGETHTETGVAEGG). Residues 10-20 (EADHTAGETHT) show a composition bias toward basic and acidic residues. Residues 40–59 (TYPSQLLWLAITFGLFYLFL) form a helical membrane-spanning segment.

Belongs to the ATPase B chain family. F-type ATPases have 2 components, F(1) - the catalytic core - and F(0) - the membrane proton channel. F(1) has five subunits: alpha(3), beta(3), gamma(1), delta(1), epsilon(1). F(0) has three main subunits: a(1), b(2) and c(10-14). The alpha and beta chains form an alternating ring which encloses part of the gamma chain. F(1) is attached to F(0) by a central stalk formed by the gamma and epsilon chains, while a peripheral stalk is formed by the delta and b chains.

Its subcellular location is the cell inner membrane. Its function is as follows. F(1)F(0) ATP synthase produces ATP from ADP in the presence of a proton or sodium gradient. F-type ATPases consist of two structural domains, F(1) containing the extramembraneous catalytic core and F(0) containing the membrane proton channel, linked together by a central stalk and a peripheral stalk. During catalysis, ATP synthesis in the catalytic domain of F(1) is coupled via a rotary mechanism of the central stalk subunits to proton translocation. In terms of biological role, component of the F(0) channel, it forms part of the peripheral stalk, linking F(1) to F(0). The protein is ATP synthase subunit b 1 of Chelativorans sp. (strain BNC1).